Consider the following 204-residue polypeptide: Viral interleukin-6 homolog (204 aa).

The signal sequence occupies residues 1 to 22 (MRWFKLWSILLVGSLLVSGTRG).

It belongs to the IL-6 superfamily. Interacts with host IL6ST.

Functionally, initiates signal transduction through binding to interleukin-6 receptor subunit beta IL6ST, independently of the cognate IL6 receptor IL6R. In infected primary effusion lymphoma cells, promotes proliferation of cells, protects them from apoptosis, and promotes immune evasion of interferon activity. Also drives blood to lymphatic endothelial cell differentiation. The polypeptide is Viral interleukin-6 homolog (K2) (Homo sapiens (Human)).